Reading from the N-terminus, the 230-residue chain is Ribosomal RNA small subunit methyltransferase I (230 aa).

It belongs to the methyltransferase superfamily. RsmI family.

It is found in the cytoplasm. The catalysed reaction is cytidine(1402) in 16S rRNA + S-adenosyl-L-methionine = 2'-O-methylcytidine(1402) in 16S rRNA + S-adenosyl-L-homocysteine + H(+). Its function is as follows. Catalyzes the 2'-O-methylation of the ribose of cytidine 1402 (C1402) in 16S rRNA. This Hydrogenobaculum sp. (strain Y04AAS1) protein is Ribosomal RNA small subunit methyltransferase I.